The chain runs to 205 residues: High frequency lysogenization protein HflD homolog (205 aa).

The protein belongs to the HflD family.

The protein localises to the cytoplasm. It localises to the cell inner membrane. The protein is High frequency lysogenization protein HflD homolog of Shewanella sp. (strain ANA-3).